The sequence spans 226 residues: Pathogenesis-related protein R minor form (226 aa).

The first 25 residues, 1–25 (MNFLKSFPFYAFLCFGQYFVAVTHA), serve as a signal peptide directing secretion. 8 disulfide bridges follow: Cys34–Cys225, Cys75–Cys85, Cys90–Cys96, Cys140–Cys214, Cys145–Cys197, Cys153–Cys163, Cys167–Cys176, and Cys177–Cys184.

This sequence belongs to the thaumatin family.

The protein resides in the vacuole. This Nicotiana tabacum (Common tobacco) protein is Pathogenesis-related protein R minor form.